The following is a 628-amino-acid chain: Phosphomethylpyrimidine synthase (628 aa).

Residues N228, M257, Y286, H322, 342–344, 383–386, and E422 contribute to the substrate site; these read SRG and DGLR. Residue H426 participates in Zn(2+) binding. Y449 lines the substrate pocket. H490 contacts Zn(2+). The [4Fe-4S] cluster site is built by C570, C573, and C578.

This sequence belongs to the ThiC family. Homodimer. [4Fe-4S] cluster is required as a cofactor.

It carries out the reaction 5-amino-1-(5-phospho-beta-D-ribosyl)imidazole + S-adenosyl-L-methionine = 4-amino-2-methyl-5-(phosphooxymethyl)pyrimidine + CO + 5'-deoxyadenosine + formate + L-methionine + 3 H(+). It functions in the pathway cofactor biosynthesis; thiamine diphosphate biosynthesis. In terms of biological role, catalyzes the synthesis of the hydroxymethylpyrimidine phosphate (HMP-P) moiety of thiamine from aminoimidazole ribotide (AIR) in a radical S-adenosyl-L-methionine (SAM)-dependent reaction. The chain is Phosphomethylpyrimidine synthase from Methylibium petroleiphilum (strain ATCC BAA-1232 / LMG 22953 / PM1).